Here is a 499-residue protein sequence, read N- to C-terminus: Probable alpha-L-arabinofuranosidase B (499 aa).

The first 18 residues, 1 to 18, serve as a signal peptide directing secretion; that stretch reads MFSRRNLVALGLAATVSA. The tract at residues 19-335 is catalytic; it reads GPCDIYEAGD…ENIVAAKYVS (317 aa). Cystine bridges form between cysteine 21/cysteine 31, cysteine 81/cysteine 86, and cysteine 176/cysteine 177. Asparagine 83 carries N-linked (GlcNAc...) asparagine glycosylation. Residue asparagine 202 is glycosylated (N-linked (GlcNAc...) asparagine). Aspartate 219 lines the substrate pocket. The Nucleophile role is filled by glutamate 221. Asparagine 222, asparagine 223, and glycine 296 together coordinate substrate. Residue aspartate 297 is the Proton donor of the active site. The ABD stretch occupies residues 336 to 499; it reads GSLVSGPSFT…SFEIETAFAS (164 aa). Cysteine 401 and cysteine 439 are oxidised to a cystine. Substrate-binding residues include histidine 416, asparagine 418, phenylalanine 419, aspartate 435, histidine 463, aspartate 465, leucine 468, and aspartate 488.

Belongs to the glycosyl hydrolase 54 family.

It localises to the secreted. The catalysed reaction is Hydrolysis of terminal non-reducing alpha-L-arabinofuranoside residues in alpha-L-arabinosides.. The protein operates within glycan metabolism; L-arabinan degradation. Alpha-L-arabinofuranosidase involved in the degradation of arabinoxylan, a major component of plant hemicellulose. Able to hydrolyze 1,5-, 1,3- and 1,2-alpha-linkages not only in L-arabinofuranosyl oligosaccharides, but also in polysaccharides containing terminal non-reducing L-arabinofuranoses in side chains, like L-arabinan, arabinogalactan and arabinoxylan. This Aspergillus niger (strain ATCC MYA-4892 / CBS 513.88 / FGSC A1513) protein is Probable alpha-L-arabinofuranosidase B (abfB).